Reading from the N-terminus, the 1068-residue chain is Phosphatidylinositol 4,5-bisphosphate 3-kinase catalytic subunit alpha isoform (1068 aa).

A PI3K-ABD domain is found at 16-105 (MPPRILVECL…QPFLKVIEPV (90 aa)). The PI3K-RBD domain maps to 187 to 289 (KGQIIVVIWV…GRMPNLMLMA (103 aa)). In terms of domain architecture, C2 PI3K-type spans 330-487 (INSALRIKIL…DWFSSVVKFP (158 aa)). Residues 517-694 (LARDNELREN…GLLLESYCRA (178 aa)) form the PIK helical domain. Positions 765-1051 (RLEECRIMSS…QMNDAHHGGW (287 aa)) constitute a PI3K/PI4K catalytic domain. The G-loop stretch occupies residues 771-777 (IMSSAKR). Residues 912–920 (GIGDRHNSN) are catalytic loop. The tract at residues 931–957 (HIDFGHFLDHKKKKFGYKRERVPFVLT) is activation loop.

The protein belongs to the PI3/PI4-kinase family. In terms of assembly, heterodimer of a catalytic subunit PIK3CA and a p85 regulatory subunit (PIK3R1, PIK3R2 or PIK3R3). Interacts with IRS1 in nuclear extracts. Interacts with RUFY3. Interacts with RASD2. Interacts with APPL1. Interacts with HRAS and KRAS. Interaction with HRAS/KRAS is required for PI3K pathway signaling and cell proliferation stimulated by EGF and FGF2. Interacts with FAM83B; activates the PI3K/AKT signaling cascade.

The enzyme catalyses L-seryl-[protein] + ATP = O-phospho-L-seryl-[protein] + ADP + H(+). The catalysed reaction is a 1,2-diacyl-sn-glycero-3-phospho-(1D-myo-inositol) + ATP = a 1,2-diacyl-sn-glycero-3-phospho-(1D-myo-inositol-3-phosphate) + ADP + H(+). It catalyses the reaction a 1,2-diacyl-sn-glycero-3-phospho-(1D-myo-inositol-4,5-bisphosphate) + ATP = a 1,2-diacyl-sn-glycero-3-phospho-(1D-myo-inositol-3,4,5-trisphosphate) + ADP + H(+). It carries out the reaction 1,2-dioctanoyl-sn-glycero-3-phospho-(1D-myo-inositol-4,5-bisphosphate) + ATP = 1,2-dioctanoyl-sn-glycero-3-phospho-(1D-myo-inositol-3,4,5-trisphosphate) + ADP + H(+). The enzyme catalyses 1-octadecanoyl-2-(5Z,8Z,11Z,14Z)-eicosatetraenoyl-sn-glycero-3-phospho-1D-myo-inositol 4,5-bisphosphate + ATP = 1-octadecanoyl-2-(5Z,8Z,11Z,14Z-eicosatetraenoyl)-sn-glycero-3-phospho-(1D-myo-inositol 3,4,5-triphosphate) + ADP + H(+). The protein operates within phospholipid metabolism; phosphatidylinositol phosphate biosynthesis. In terms of biological role, phosphoinositide-3-kinase (PI3K) phosphorylates phosphatidylinositol (PI) and its phosphorylated derivatives at position 3 of the inositol ring to produce 3-phosphoinositides. Uses ATP and PtdIns(4,5)P2 (phosphatidylinositol 4,5-bisphosphate) to generate phosphatidylinositol 3,4,5-trisphosphate (PIP3). PIP3 plays a key role by recruiting PH domain-containing proteins to the membrane, including AKT1 and PDPK1, activating signaling cascades involved in cell growth, survival, proliferation, motility and morphology. Participates in cellular signaling in response to various growth factors. Involved in the activation of AKT1 upon stimulation by receptor tyrosine kinases ligands such as EGF, insulin, IGF1, VEGFA and PDGF. Involved in signaling via insulin-receptor substrate (IRS) proteins. Essential in endothelial cell migration during vascular development through VEGFA signaling, possibly by regulating RhoA activity. Required for lymphatic vasculature development, possibly by binding to RAS and by activation by EGF and FGF2, but not by PDGF. Regulates invadopodia formation through the PDPK1-AKT1 pathway. Participates in cardiomyogenesis in embryonic stem cells through a AKT1 pathway. Participates in vasculogenesis in embryonic stem cells through PDK1 and protein kinase C pathway. In addition to its lipid kinase activity, it displays a serine-protein kinase activity that results in the autophosphorylation of the p85alpha regulatory subunit as well as phosphorylation of other proteins such as 4EBP1, H-Ras, the IL-3 beta c receptor and possibly others. Plays a role in the positive regulation of phagocytosis and pinocytosis. The polypeptide is Phosphatidylinositol 4,5-bisphosphate 3-kinase catalytic subunit alpha isoform (PIK3CA) (Bos taurus (Bovine)).